A 427-amino-acid polypeptide reads, in one-letter code: UPF0761 membrane protein Plut_1323 (427 aa).

The next 6 helical transmembrane spans lie at 51–71 (LLSIVPLLAVVLSILNVFAVF), 105–125 (TFTMPIFGALFLFIVALVLIS), 147–167 (FTLYWTVLTLGPVLLATSLAA), 188–208 (LLSLLPSTITVLALLLLYLLV), 221–241 (GALVATLLFEVSKRWFAFYVA), and 251–271 (GALSVIPMLFFWIYLGWVVVL).

It belongs to the UPF0761 family.

It is found in the cell inner membrane. The polypeptide is UPF0761 membrane protein Plut_1323 (Chlorobium luteolum (strain DSM 273 / BCRC 81028 / 2530) (Pelodictyon luteolum)).